Reading from the N-terminus, the 154-residue chain is Small ribosomal subunit protein uS19B (154 aa).

The residue at position 63 (S63) is a Phosphoserine.

The protein belongs to the universal ribosomal protein uS19 family. In terms of assembly, component of the small ribosomal subunit (SSU). Mature yeast ribosomes consist of a small (40S) and a large (60S) subunit. The 40S small subunit contains 1 molecule of ribosomal RNA (18S rRNA) and at least 33 different proteins. The large 60S subunit contains 3 rRNA molecules (25S, 5.8S and 5S rRNA) and at least 46 different proteins.

The protein localises to the cytoplasm. Its subcellular location is the nucleus. The protein resides in the nucleolus. Functionally, component of the ribosome, a large ribonucleoprotein complex responsible for the synthesis of proteins in the cell. The small ribosomal subunit (SSU) binds messenger RNAs (mRNAs) and translates the encoded message by selecting cognate aminoacyl-transfer RNA (tRNA) molecules. The large subunit (LSU) contains the ribosomal catalytic site termed the peptidyl transferase center (PTC), which catalyzes the formation of peptide bonds, thereby polymerizing the amino acids delivered by tRNAs into a polypeptide chain. The nascent polypeptides leave the ribosome through a tunnel in the LSU and interact with protein factors that function in enzymatic processing, targeting, and the membrane insertion of nascent chains at the exit of the ribosomal tunnel. uS19 is involved in the nuclear export of the small ribosomal subunit precursor. Has a role in the late stage of the assembly of pre-40S particles within the nucleus and controls their export to the cytoplasm. In Schizosaccharomyces pombe (strain 972 / ATCC 24843) (Fission yeast), this protein is Small ribosomal subunit protein uS19B (rps1502).